Here is a 505-residue protein sequence, read N- to C-terminus: Maturase K (505 aa).

The protein belongs to the intron maturase 2 family. MatK subfamily.

It is found in the plastid. The protein localises to the chloroplast. In terms of biological role, usually encoded in the trnK tRNA gene intron. Probably assists in splicing its own and other chloroplast group II introns. The sequence is that of Maturase K from Rosa stellata (Star rose).